We begin with the raw amino-acid sequence, 807 residues long: Dual specificity protein kinase YAK1 (807 aa).

Residues 1–19 (MNSSNNNDSSSSNSNMNNS) show a composition bias toward low complexity. Positions 1-84 (MNSSNNNDSS…QQQQQQQQNS (84 aa)) are disordered. Residues 20 to 31 (LSPTLVTHSDAS) are compositionally biased toward polar residues. The residue at position 38 (Ser38) is a Phosphoserine. Positions 55 to 84 (NQGSQRSPQQQHQNHHQQQQQQQQQQQQNS) are enriched in low complexity. Phosphoserine is present on residues Ser115, Ser118, and Ser127. The segment at 124–180 (RRKSSLVVPPARAPAPNPFQYDSYPAYTSSNTSLAGNSSGQYPSGYQQQQQQVYQQG) is disordered. Residues 149 to 160 (AYTSSNTSLAGN) show a composition bias toward polar residues. A compositionally biased stretch (low complexity) spans 161–180 (SSGQYPSGYQQQQQQVYQQG). Residue Ser206 is modified to Phosphoserine. Positions 214-224 (SNFSSLNSNTN) are enriched in low complexity. The segment at 214 to 254 (SNFSSLNSNTNQGTNSIPVMSPYRRLSAYPPSTSPPLQPPF) is disordered. Phosphoserine occurs at positions 240, 245, and 247. Thr288 bears the Phosphothreonine mark. Ser295 carries the post-translational modification Phosphoserine. Residues 369-704 (YLVLDILGQG…PQQAMLHPFI (336 aa)) enclose the Protein kinase domain. Residues 375–383 (LGQGTFGQV) and Lys398 contribute to the ATP site. Asp496 serves as the catalytic Proton acceptor. Tyr530 carries the post-translational modification Phosphotyrosine. Residues 714 to 758 (FPPGSSLPGPSEKHDDAKGQQSEYGSANDSSNNAGHNYVYNPSSA) are disordered. A compositionally biased stretch (polar residues) spans 732 to 758 (GQQSEYGSANDSSNNAGHNYVYNPSSA).

It belongs to the protein kinase superfamily. CMGC Ser/Thr protein kinase family. MNB/DYRK subfamily. Post-translationally, phosphorylated; highly.

It is found in the cytoplasm. It localises to the nucleus. The enzyme catalyses L-seryl-[protein] + ATP = O-phospho-L-seryl-[protein] + ADP + H(+). It carries out the reaction L-threonyl-[protein] + ATP = O-phospho-L-threonyl-[protein] + ADP + H(+). It catalyses the reaction L-tyrosyl-[protein] + ATP = O-phospho-L-tyrosyl-[protein] + ADP + H(+). Functionally, negative regulator of the cell cycle acting downstream of the cAMP-dependent protein kinase. Part of a glucose-sensing system involved in growth control in response to glucose availability. Phosphorylates POP2. This chain is Dual specificity protein kinase YAK1 (YAK1), found in Saccharomyces cerevisiae (strain ATCC 204508 / S288c) (Baker's yeast).